The sequence spans 475 residues: Coronin-2B (475 aa).

WD repeat units lie at residues 80–120 (GHQG…LKRN), 130–172 (GHSR…KMID), 174–212 (HTDV…VLQE), 215–258 (CKNH…MPVT), and 260–303 (EEID…PYLT). Residues 431–470 (NELLRMFFKQQEEIRRLKEQLSQRDLLVRQLELELKNLRN) adopt a coiled-coil conformation.

Belongs to the WD repeat coronin family.

Its subcellular location is the cytoplasm. The protein resides in the cytoskeleton. Its function is as follows. May play a role in the reorganization of neuronal actin structure. The sequence is that of Coronin-2B (coro2b) from Xenopus laevis (African clawed frog).